A 173-amino-acid polypeptide reads, in one-letter code: Crossover junction endodeoxyribonuclease RuvC (173 aa).

Catalysis depends on residues Asp11, Glu71, and Asp143. Mg(2+) is bound by residues Asp11, Glu71, and Asp143.

Belongs to the RuvC family. As to quaternary structure, homodimer which binds Holliday junction (HJ) DNA. The HJ becomes 2-fold symmetrical on binding to RuvC with unstacked arms; it has a different conformation from HJ DNA in complex with RuvA. In the full resolvosome a probable DNA-RuvA(4)-RuvB(12)-RuvC(2) complex forms which resolves the HJ. It depends on Mg(2+) as a cofactor.

The protein localises to the cytoplasm. The enzyme catalyses Endonucleolytic cleavage at a junction such as a reciprocal single-stranded crossover between two homologous DNA duplexes (Holliday junction).. In terms of biological role, the RuvA-RuvB-RuvC complex processes Holliday junction (HJ) DNA during genetic recombination and DNA repair. Endonuclease that resolves HJ intermediates. Cleaves cruciform DNA by making single-stranded nicks across the HJ at symmetrical positions within the homologous arms, yielding a 5'-phosphate and a 3'-hydroxyl group; requires a central core of homology in the junction. The consensus cleavage sequence is 5'-(A/T)TT(C/G)-3'. Cleavage occurs on the 3'-side of the TT dinucleotide at the point of strand exchange. HJ branch migration catalyzed by RuvA-RuvB allows RuvC to scan DNA until it finds its consensus sequence, where it cleaves and resolves the cruciform DNA. This Brucella abortus (strain 2308) protein is Crossover junction endodeoxyribonuclease RuvC.